The primary structure comprises 688 residues: PR domain zinc finger protein 8 (688 aa).

The region spanning 16-131 (KAVQQCLTDI…KDEELLVWYG (116 aa)) is the SET domain. Y130 is an S-adenosyl-L-methionine binding site. A C2H2-type 1 zinc finger spans residues 154–182 (YTCLECSQRFQFEFPYVAHLRFRCPKRLH). 2 disordered regions span residues 184–309 (TDAN…GCKG) and 397–506 (EEAA…PARS). The segment covering 192-208 (QGGGLGTKDHGGGGGGK) has biased composition (gly residues). Composition is skewed to low complexity over residues 209–219 (EQQQQQQQQQQ) and 275–284 (GSSSCVAAPG). Composition is skewed to gly residues over residues 414–424 (AGGGVAGGGSN) and 470–489 (LGGG…GGGQ). 2 C2H2-type zinc fingers span residues 624–647 (NWCA…RSHH) and 665–687 (LKCP…MTSH).

This sequence belongs to the class V-like SAM-binding methyltransferase superfamily. In terms of assembly, interacts with BHLHE22. Interacts with EPM2A and NHLRC1. This interaction sequesters EPM2A and NHLRC1 to the nucleus. As to expression, expressed in brain, heart, liver, testes, retina. Highest expression is observed in the retina and hippocampus; moderately expressed in the cortex and cerebellum. In the retina, it is expressed in bipolar and amacrine cells.

It localises to the nucleus. Functionally, probable histone methyltransferase, preferentially acting on 'Lys-9' of histone H3. Histone methyltransferase activity has not been confirmed in other species. Involved in the control of steroidogenesis through transcriptional repression of steroidogenesis marker genes such as CYP17A1 and LHCGR. Forms with BHLHE22 a transcriptional repressor complex controlling genes involved in neural development and neuronal differentiation. In the retina, it is required for rod bipolar and type 2 OFF-cone bipolar cell survival. The chain is PR domain zinc finger protein 8 (Prdm8) from Mus musculus (Mouse).